The following is a 377-amino-acid chain: UPF0754 membrane protein BPUM_0927 (377 aa).

Helical transmembrane passes span 1-21 (MNIF…GAAT) and 357-377 (FLGG…VTLF).

The protein belongs to the UPF0754 family.

It is found in the cell membrane. In Bacillus pumilus (strain SAFR-032), this protein is UPF0754 membrane protein BPUM_0927.